The following is a 271-amino-acid chain: Putative protein FAM220BP (271 aa).

This is Putative protein FAM220BP (FAM220BP) from Homo sapiens (Human).